Consider the following 82-residue polypeptide: Cytochrome b559 subunit alpha (82 aa).

The helical transmembrane segment at 22 to 36 (IIHAVTLPAIFIAGF) threads the bilayer. Histidine 24 is a heme binding site.

It belongs to the PsbE/PsbF family. Heterodimer of an alpha subunit and a beta subunit. PSII is composed of 1 copy each of membrane proteins PsbA, PsbB, PsbC, PsbD, PsbE, PsbF, PsbH, PsbI, PsbJ, PsbK, PsbL, PsbM, PsbT, PsbX, PsbY, Psb30/Ycf12, peripheral proteins PsbO, CyanoQ (PsbQ), PsbU, PsbV and a large number of cofactors. It forms dimeric complexes. Heme b is required as a cofactor.

Its subcellular location is the cellular thylakoid membrane. This b-type cytochrome is tightly associated with the reaction center of photosystem II (PSII). PSII is a light-driven water:plastoquinone oxidoreductase that uses light energy to abstract electrons from H(2)O, generating O(2) and a proton gradient subsequently used for ATP formation. It consists of a core antenna complex that captures photons, and an electron transfer chain that converts photonic excitation into a charge separation. The polypeptide is Cytochrome b559 subunit alpha (Prochlorococcus marinus (strain MIT 9211)).